Reading from the N-terminus, the 385-residue chain is Acyl-CoA dehydrogenase IpdE1 (385 aa).

Residues 126-129 and S161 each bind FAD; that span reads QGYS. Residue E244 is the Proton acceptor of the active site. 364 to 366 is an FAD binding site; that stretch reads SNE.

Belongs to the acyl-CoA dehydrogenase family. As to quaternary structure, heterotetramer composed of 2 IpdE1 subunits and 2 IpdE2 subunits. Requires FAD as cofactor.

It carries out the reaction 3-[(3aS,4S,5R,7aS)-5-hydroxy-7a-methyl-1-oxo-octahydro-1H-inden-4-yl]propanoyl-CoA + A = (2E)-3-[(3aS,4S,5R,7aS)-5-hydroxy-7a-methyl-1-oxo-octahydro-1H-inden-4-yl]prop-2-enoyl-CoA + AH2. The protein operates within steroid metabolism; cholesterol degradation. Involved in cholesterol degradation. Catalyzes the dehydrogenation of 5OH-HIP-CoA to 5OH-HIPE-CoA. Can also use octanoyl-CoA and dihydroferuloyl-CoA, with lower efficiency. Cannot use 3-oxo-4-pregnene-20-carboxyl-CoA (3-OPC-CoA). This is Acyl-CoA dehydrogenase IpdE1 from Mycobacterium tuberculosis (strain ATCC 25618 / H37Rv).